We begin with the raw amino-acid sequence, 101 residues long: uncharacterized protein (101 aa).

The helical transmembrane segment at 58–80 (VFPSLNIIILMSDALMFFLRSSI) threads the bilayer.

The protein resides in the membrane. This is an uncharacterized protein from Saccharomyces cerevisiae (strain ATCC 204508 / S288c) (Baker's yeast).